The sequence spans 626 residues: 1-deoxy-D-xylulose-5-phosphate synthase 2 (626 aa).

Thiamine diphosphate is bound by residues H74 and 115-117 (GHA). D146 contacts Mg(2+). Residues 147-148 (GS), N175, F286, and E368 each bind thiamine diphosphate. N175 provides a ligand contact to Mg(2+).

It belongs to the transketolase family. DXPS subfamily. As to quaternary structure, homodimer. Mg(2+) is required as a cofactor. Thiamine diphosphate serves as cofactor.

The catalysed reaction is D-glyceraldehyde 3-phosphate + pyruvate + H(+) = 1-deoxy-D-xylulose 5-phosphate + CO2. It participates in metabolic intermediate biosynthesis; 1-deoxy-D-xylulose 5-phosphate biosynthesis; 1-deoxy-D-xylulose 5-phosphate from D-glyceraldehyde 3-phosphate and pyruvate: step 1/1. Catalyzes the acyloin condensation reaction between C atoms 2 and 3 of pyruvate and glyceraldehyde 3-phosphate to yield 1-deoxy-D-xylulose-5-phosphate (DXP). This chain is 1-deoxy-D-xylulose-5-phosphate synthase 2, found in Geobacter sulfurreducens (strain ATCC 51573 / DSM 12127 / PCA).